A 382-amino-acid chain; its full sequence is Phosphatidylglycerol--prolipoprotein diacylglyceryl transferase (382 aa).

The next 3 helical transmembrane spans lie at 18–38 (IQWY…MFVF), 53–73 (FFIF…SFVI), and 91–111 (LAIQ…FNFF). Arg162 is a binding site for a 1,2-diacyl-sn-glycero-3-phospho-(1'-sn-glycerol). Transmembrane regions (helical) follow at residues 213 to 233 (IPLF…IYFV), 243 to 263 (GTIG…LENF), 274 to 294 (ITTS…CQFI), and 302 to 322 (FWTY…TTLF).

This sequence belongs to the Lgt family.

The protein resides in the cell membrane. It catalyses the reaction L-cysteinyl-[prolipoprotein] + a 1,2-diacyl-sn-glycero-3-phospho-(1'-sn-glycerol) = an S-1,2-diacyl-sn-glyceryl-L-cysteinyl-[prolipoprotein] + sn-glycerol 1-phosphate + H(+). It participates in protein modification; lipoprotein biosynthesis (diacylglyceryl transfer). Functionally, catalyzes the transfer of the diacylglyceryl group from phosphatidylglycerol to the sulfhydryl group of the N-terminal cysteine of a prolipoprotein, the first step in the formation of mature lipoproteins. In Mycoplasma genitalium (strain ATCC 33530 / DSM 19775 / NCTC 10195 / G37) (Mycoplasmoides genitalium), this protein is Phosphatidylglycerol--prolipoprotein diacylglyceryl transferase.